A 158-amino-acid chain; its full sequence is 2-C-methyl-D-erythritol 2,4-cyclodiphosphate synthase (158 aa).

The a divalent metal cation site is built by Asp-10 and His-12. 4-CDP-2-C-methyl-D-erythritol 2-phosphate contacts are provided by residues 10-12 (DVH) and 36-37 (HS). Residue His-44 participates in a divalent metal cation binding. 4-CDP-2-C-methyl-D-erythritol 2-phosphate is bound by residues 58–60 (DIG), 63–67 (FSDTD), and Arg-144.

The protein belongs to the IspF family. As to quaternary structure, homotrimer. A divalent metal cation serves as cofactor.

The enzyme catalyses 4-CDP-2-C-methyl-D-erythritol 2-phosphate = 2-C-methyl-D-erythritol 2,4-cyclic diphosphate + CMP. It participates in isoprenoid biosynthesis; isopentenyl diphosphate biosynthesis via DXP pathway; isopentenyl diphosphate from 1-deoxy-D-xylulose 5-phosphate: step 4/6. In terms of biological role, involved in the biosynthesis of isopentenyl diphosphate (IPP) and dimethylallyl diphosphate (DMAPP), two major building blocks of isoprenoid compounds. Catalyzes the conversion of 4-diphosphocytidyl-2-C-methyl-D-erythritol 2-phosphate (CDP-ME2P) to 2-C-methyl-D-erythritol 2,4-cyclodiphosphate (ME-CPP) with a corresponding release of cytidine 5-monophosphate (CMP). The chain is 2-C-methyl-D-erythritol 2,4-cyclodiphosphate synthase from Burkholderia vietnamiensis (strain G4 / LMG 22486) (Burkholderia cepacia (strain R1808)).